Reading from the N-terminus, the 427-residue chain is Enolase (427 aa).

Gln-162 serves as a coordination point for (2R)-2-phosphoglycerate. Glu-204 (proton donor) is an active-site residue. Asp-241, Glu-284, and Asp-311 together coordinate Mg(2+). (2R)-2-phosphoglycerate is bound by residues Lys-336, Arg-365, Ser-366, and Lys-387. The active-site Proton acceptor is the Lys-336.

This sequence belongs to the enolase family. The cofactor is Mg(2+).

It is found in the cytoplasm. It localises to the secreted. The protein localises to the cell surface. It catalyses the reaction (2R)-2-phosphoglycerate = phosphoenolpyruvate + H2O. Its pathway is carbohydrate degradation; glycolysis; pyruvate from D-glyceraldehyde 3-phosphate: step 4/5. Catalyzes the reversible conversion of 2-phosphoglycerate (2-PG) into phosphoenolpyruvate (PEP). It is essential for the degradation of carbohydrates via glycolysis. The sequence is that of Enolase from Natranaerobius thermophilus (strain ATCC BAA-1301 / DSM 18059 / JW/NM-WN-LF).